Consider the following 276-residue polypeptide: MLLRFTKMHGLGNDFMVLDLVSQHAHILPKHAKQWGDRHTGIGFDQLLLVEAPNNPDVDFRYRIFNSDGSEVEQCGNGARCFARFVLDKRLTAKKQIRVETKSGIIELDIRSDGQISVDMGPPRFVPEEIPFEAAEQATCYTVDVDGQHVDMAAVSMGNPHAVLRVDDINNAPVHELGPKIEHHPRFPARVNVGFLHVVDRQRAQLRVWERGAGETQACGTGACAAAVAAISQGWMDSPLLIDLPGGRLSIEWAGPGHSVMMTGPAVRVYEGQVRL.

N13, Q46, and N66 together coordinate substrate. The active-site Proton donor is C75. Substrate is bound by residues 76–77 (GN), N159, N192, and 210–211 (ER). C219 functions as the Proton acceptor in the catalytic mechanism. 220-221 (GT) contacts substrate.

Belongs to the diaminopimelate epimerase family. Homodimer.

The protein localises to the cytoplasm. The enzyme catalyses (2S,6S)-2,6-diaminopimelate = meso-2,6-diaminopimelate. The protein operates within amino-acid biosynthesis; L-lysine biosynthesis via DAP pathway; DL-2,6-diaminopimelate from LL-2,6-diaminopimelate: step 1/1. Its function is as follows. Catalyzes the stereoinversion of LL-2,6-diaminopimelate (L,L-DAP) to meso-diaminopimelate (meso-DAP), a precursor of L-lysine and an essential component of the bacterial peptidoglycan. The polypeptide is Diaminopimelate epimerase (Pseudomonas syringae pv. syringae (strain B728a)).